The chain runs to 500 residues: Glycerol kinase (500 aa).

Thr-15 contacts ADP. Thr-15, Thr-16, and Ser-17 together coordinate ATP. Thr-15 provides a ligand contact to sn-glycerol 3-phosphate. Residue Arg-19 coordinates ADP. Sn-glycerol 3-phosphate contacts are provided by Arg-85, Glu-86, Tyr-137, and Asp-245. Positions 85, 86, 137, 245, and 246 each coordinate glycerol. Thr-267 and Gly-310 together coordinate ADP. ATP contacts are provided by Thr-267, Gly-310, Gln-314, and Gly-411. Gly-411 and Asn-415 together coordinate ADP.

It belongs to the FGGY kinase family.

The catalysed reaction is glycerol + ATP = sn-glycerol 3-phosphate + ADP + H(+). It functions in the pathway polyol metabolism; glycerol degradation via glycerol kinase pathway; sn-glycerol 3-phosphate from glycerol: step 1/1. Its activity is regulated as follows. Inhibited by fructose 1,6-bisphosphate (FBP). Key enzyme in the regulation of glycerol uptake and metabolism. Catalyzes the phosphorylation of glycerol to yield sn-glycerol 3-phosphate. This Aeromonas hydrophila subsp. hydrophila (strain ATCC 7966 / DSM 30187 / BCRC 13018 / CCUG 14551 / JCM 1027 / KCTC 2358 / NCIMB 9240 / NCTC 8049) protein is Glycerol kinase.